The chain runs to 62 residues: DNA-binding protein 7 (62 aa).

This sequence belongs to the 7 kDa DNA-binding/endoribonuclease P2 family. In terms of assembly, monomer.

The protein localises to the cytoplasm. Functionally, can constrain negative DNA supercoils. May be involved in maintaining the integrity of the genome at high temperature. The chain is DNA-binding protein 7 from Metallosphaera cuprina (strain Ar-4).